The primary structure comprises 485 residues: NADH-quinone oxidoreductase subunit N (485 aa).

The next 14 membrane-spanning stretches (helical) occupy residues 8–28 (LIALLPLLIVGLTVVVVMLSI), 35–55 (FLNATLSVIGLNAALVSLWFV), 71–91 (GFAMLYTGLVLLASLATCTFA), 105–125 (FYLLVLIAALGGILLANANHL), 127–147 (SLFLGIELISLPLFGLVGYAF), 159–179 (YTILSAAASSFLLFGMALVYA), 203–223 (LLAGFGLMIVGLGFKLSLVPF), 235–255 (PAPVSTFLATASKIAIFGVVM), 271–291 (VVLAIIAFASIIFGNLMALSQ), 297–317 (LLGYSSISHLGYLLVALIALQ), 326–346 (VGVYLAGYLFSSLGAFGVVSL), 373–393 (AAVMTVMMLSLAGIPMTLGFI), 408–430 (WWLVGAVVVGSAIGLYYYLRVAV), and 455–475 (IVVLISALLVLVLGIWPQPLI).

The protein belongs to the complex I subunit 2 family. In terms of assembly, NDH-1 is composed of 13 different subunits. Subunits NuoA, H, J, K, L, M, N constitute the membrane sector of the complex.

It localises to the cell inner membrane. The enzyme catalyses a quinone + NADH + 5 H(+)(in) = a quinol + NAD(+) + 4 H(+)(out). Functionally, NDH-1 shuttles electrons from NADH, via FMN and iron-sulfur (Fe-S) centers, to quinones in the respiratory chain. The immediate electron acceptor for the enzyme in this species is believed to be ubiquinone. Couples the redox reaction to proton translocation (for every two electrons transferred, four hydrogen ions are translocated across the cytoplasmic membrane), and thus conserves the redox energy in a proton gradient. The protein is NADH-quinone oxidoreductase subunit N of Escherichia coli O7:K1 (strain IAI39 / ExPEC).